Here is an 89-residue protein sequence, read N- to C-terminus: Large ribosomal subunit protein bL27 (89 aa).

A disordered region spans residues 1–22 (MAHKKAGGSSRNGRDSESKRLG).

Belongs to the bacterial ribosomal protein bL27 family.

The sequence is that of Large ribosomal subunit protein bL27 from Bartonella henselae (strain ATCC 49882 / DSM 28221 / CCUG 30454 / Houston 1) (Rochalimaea henselae).